The primary structure comprises 79 residues: Conotoxin ArMKLT2-031 (79 aa).

The N-terminal stretch at 1–22 (MKLTCVLIIAVLFLTACQLTTG) is a signal peptide. The propeptide occupies 23–46 (ETYSRGEQKDHALRSTDKNSKLTR). Q47 carries the post-translational modification Pyrrolidone carboxylic acid. Disulfide bonds link C48–C62, C55–C66, and C61–C73.

The protein belongs to the conotoxin O1 superfamily. Expressed by the venom duct.

Its subcellular location is the secreted. This Conus arenatus (Sand-dusted cone) protein is Conotoxin ArMKLT2-031.